Reading from the N-terminus, the 115-residue chain is Large ribosomal subunit protein bL20 (115 aa).

It belongs to the bacterial ribosomal protein bL20 family.

Its function is as follows. Binds directly to 23S ribosomal RNA and is necessary for the in vitro assembly process of the 50S ribosomal subunit. It is not involved in the protein synthesizing functions of that subunit. This Prochlorococcus marinus (strain MIT 9215) protein is Large ribosomal subunit protein bL20.